The primary structure comprises 131 residues: Small ribosomal subunit protein uS8 (131 aa).

It belongs to the universal ribosomal protein uS8 family. Part of the 30S ribosomal subunit. Contacts proteins S5 and S12.

In terms of biological role, one of the primary rRNA binding proteins, it binds directly to 16S rRNA central domain where it helps coordinate assembly of the platform of the 30S subunit. This chain is Small ribosomal subunit protein uS8, found in Acinetobacter baumannii (strain AB307-0294).